Consider the following 247-residue polypeptide: 1-(5-phosphoribosyl)-5-[(5-phosphoribosylamino)methylideneamino] imidazole-4-carboxamide isomerase (247 aa).

Asp8 functions as the Proton acceptor in the catalytic mechanism. Asp131 acts as the Proton donor in catalysis.

This sequence belongs to the HisA/HisF family.

The protein resides in the cytoplasm. The enzyme catalyses 1-(5-phospho-beta-D-ribosyl)-5-[(5-phospho-beta-D-ribosylamino)methylideneamino]imidazole-4-carboxamide = 5-[(5-phospho-1-deoxy-D-ribulos-1-ylimino)methylamino]-1-(5-phospho-beta-D-ribosyl)imidazole-4-carboxamide. Its pathway is amino-acid biosynthesis; L-histidine biosynthesis; L-histidine from 5-phospho-alpha-D-ribose 1-diphosphate: step 4/9. The polypeptide is 1-(5-phosphoribosyl)-5-[(5-phosphoribosylamino)methylideneamino] imidazole-4-carboxamide isomerase (Acidovorax sp. (strain JS42)).